The primary structure comprises 204 residues: MSKFSYPALRAALILAASPVLPALANDGTIVITGSISDQTCVIEEPSTLNHIKVVQLPKISKNALRNDGDTAGATPFDIKLKECPQALGALKLYFEPGITTNYDTGDLIAYKQTYNASGNGNLSTVSSATKAKGVEFRLANLNGQHIRMGTDKTTQAAQTFTGKVTNGSKSYTLRYLASYVKKPKEDVDAAQITSYVGFSVVYP.

The first 25 residues, 1–25 (MSKFSYPALRAALILAASPVLPALA), serve as a signal peptide directing secretion. The cysteines at positions 41 and 84 are disulfide-linked.

It belongs to the fimbrial protein family.

It localises to the fimbrium. Bordetella pertussis is the causative agent of whooping cough. An essential step in the disease process is the attachment of the bacteria to the ciliated epithelium of the respiratory tract, enabling the organism to resist normal host-clearance mechanisms. It is unclear which bacterial cell surface component are responsible for adherence but the fimbriae of B.pertussis are prime candidates for being involved in this process. The polypeptide is Serotype 3 fimbrial subunit (fim3) (Bordetella pertussis (strain Tohama I / ATCC BAA-589 / NCTC 13251)).